The chain runs to 91 residues: MGILKLPVVLIVLCVALNHLEGGGKPTESHQMEKRKCGTATCETQRLANFLAPSSNKLGAIFSPTKMGSNTYGKRKKVEILKREPLSYLPI.

The N-terminal stretch at 1–22 (MGILKLPVVLIVLCVALNHLEG) is a signal peptide. A propeptide spanning residues 23 to 33 (GGKPTESHQME) is cleaved from the precursor. Cys-37 and Cys-42 are disulfide-bonded. The residue at position 72 (Tyr-72) is a Tyrosine amide. Residues 78-91 (VEILKREPLSYLPI) constitute a propeptide that is removed on maturation.

This sequence belongs to the calcitonin family. Can form homodimers. Interacts with IDE and INS. Interaction with INS inhibits homodimerization and fibril formation.

Its subcellular location is the secreted. Its function is as follows. Amylin/IAPP is a glucoregulatory peptide hormone that plays an important role in the regulation of energy homeostasis. Selectively inhibits insulin-stimulated glucose utilization and glycogen deposition in muscle, while not affecting adipocyte glucose metabolism. IAPP function is mediated by the CALCR-RAMPs (AMYRs) receptor complexes. Amylin can also bind CALCR receptor in the absence of RAMPs, although it is more selective for AMYRs. The chain is Islet amyloid polypeptide (IAPP) from Bos taurus (Bovine).